We begin with the raw amino-acid sequence, 205 residues long: Type III pantothenate kinase (205 aa).

5–12 (DIGNTTYH) is a binding site for ATP. Residues Tyr-68 and 72–75 (GIDR) contribute to the substrate site. Asp-74 functions as the Proton acceptor in the catalytic mechanism. Asp-89 contacts K(+). Ser-92 is a binding site for ATP. Ser-144 is a substrate binding site.

It belongs to the type III pantothenate kinase family. Homodimer. The cofactor is NH4(+). K(+) serves as cofactor.

Its subcellular location is the cytoplasm. The catalysed reaction is (R)-pantothenate + ATP = (R)-4'-phosphopantothenate + ADP + H(+). It functions in the pathway cofactor biosynthesis; coenzyme A biosynthesis; CoA from (R)-pantothenate: step 1/5. Its function is as follows. Catalyzes the phosphorylation of pantothenate (Pan), the first step in CoA biosynthesis. The chain is Type III pantothenate kinase from Sulfurimonas denitrificans (strain ATCC 33889 / DSM 1251) (Thiomicrospira denitrificans (strain ATCC 33889 / DSM 1251)).